The following is a 107-amino-acid chain: MKVHKGDTVLVVSGKDKGAKGKVLQAYPERNRVLVEGVNRIKKHTAISTNQRGAKSGGIVTQEAPIHVSNVMVVDSDGKPTRIGYRVDEETGKRVRISKRNGKDIQA.

This sequence belongs to the universal ribosomal protein uL24 family. Part of the 50S ribosomal subunit.

One of two assembly initiator proteins, it binds directly to the 5'-end of the 23S rRNA, where it nucleates assembly of the 50S subunit. Functionally, one of the proteins that surrounds the polypeptide exit tunnel on the outside of the subunit. In Mycobacterium ulcerans (strain Agy99), this protein is Large ribosomal subunit protein uL24.